We begin with the raw amino-acid sequence, 882 residues long: MKQLTSSQVRQMFLDFFKEHGHMVMPSASLIPQDDPTLLWINSGVATMKKYFDGSVVPKNHRITSSQKSIRTNDIENVGKTARHQTFFEMLGNFSVGDYFKKEVIPWAWEFLTSPKWLGLDPDKLYVTVYPKDTEAYHMWHDVVGLPEDHIVKLEDNFWDIGEGPCGPDSEIFYDRGQENNDVAEDDPENFPGGENARYLEIWNIVFSQFNHLPNGKYVDQPHKNIDTGMGLERVVSIIQDAPTNFETDLFMPIIKETEKLSDGKKYAANKEDDVAFKIIADHVRAVSFAIADGALPSNSGRGYVLRRLIRRADLNGQRLGIKGAFLYKLVPVVGEIMKSHYPEVVDQQAFIQKVIKNEEERFQVTLSSGLNLLDNIIAEAKKSDDKTVSGKDAFKLFDTYGFPYELTFEAAQDAGLKVDKKGFDEEMKAQKERARKARGNLQSMGSQDVTLMNIKDKSEFEYGTLEEKHAKLIDIVVNDKLVDKADGEHATLIFDKTPFYAERGGQVADHGEILNQNGELVARVTDVQHAPNDQNLHFVDIILPLEKGQEYILKVDQKRRRGLKHNHTATHLLHAALREVLGTHTHQAGSLVEPDYLRFDFTSLEPMTKKEIANVEKIVNEKIWEEIPVKTTVTDPDTGLKMGALALFGEKYGDTVRVVQIDDFSTEFCGGTHCENTDQIGMLKIVSESAVGAGTRRIIAVTGPEAYKYVTDRDEILKEVQDEVKATKAEDVTNKISSLEEDLRASQKEAEQLKAQINKAKAGDLFNDVKQVKGLTVIAAQADVEGMNDLRELADNWKSSDKSDVLVLAAEVNGKANMVISLNDKAIKAGLKAGDLIKTAAPIFGGGGGGRPNMAQAGGKNPAGLKDAIAKVLQEVEEKQN.

The Zn(2+) site is built by His-568, His-572, Cys-670, and His-674.

Belongs to the class-II aminoacyl-tRNA synthetase family. Requires Zn(2+) as cofactor.

It localises to the cytoplasm. It carries out the reaction tRNA(Ala) + L-alanine + ATP = L-alanyl-tRNA(Ala) + AMP + diphosphate. Its function is as follows. Catalyzes the attachment of alanine to tRNA(Ala) in a two-step reaction: alanine is first activated by ATP to form Ala-AMP and then transferred to the acceptor end of tRNA(Ala). Also edits incorrectly charged Ser-tRNA(Ala) and Gly-tRNA(Ala) via its editing domain. The chain is Alanine--tRNA ligase from Lactobacillus gasseri (strain ATCC 33323 / DSM 20243 / BCRC 14619 / CIP 102991 / JCM 1131 / KCTC 3163 / NCIMB 11718 / NCTC 13722 / AM63).